We begin with the raw amino-acid sequence, 178 residues long: ATP synthase subunit b, chloroplastic (178 aa).

A helical transmembrane segment spans residues 23–43; that stretch reads IFETNIINLAAVVAIVISFVG.

Belongs to the ATPase B chain family. As to quaternary structure, F-type ATPases have 2 components, F(1) - the catalytic core - and F(0) - the membrane proton channel. F(1) has five subunits: alpha(3), beta(3), gamma(1), delta(1), epsilon(1). F(0) has four main subunits: a(1), b(1), b'(1) and c(10-14). The alpha and beta chains form an alternating ring which encloses part of the gamma chain. F(1) is attached to F(0) by a central stalk formed by the gamma and epsilon chains, while a peripheral stalk is formed by the delta, b and b' chains.

The protein resides in the plastid. Its subcellular location is the chloroplast thylakoid membrane. Its function is as follows. F(1)F(0) ATP synthase produces ATP from ADP in the presence of a proton or sodium gradient. F-type ATPases consist of two structural domains, F(1) containing the extramembraneous catalytic core and F(0) containing the membrane proton channel, linked together by a central stalk and a peripheral stalk. During catalysis, ATP synthesis in the catalytic domain of F(1) is coupled via a rotary mechanism of the central stalk subunits to proton translocation. In terms of biological role, component of the F(0) channel, it forms part of the peripheral stalk, linking F(1) to F(0). This chain is ATP synthase subunit b, chloroplastic, found in Tetradesmus obliquus (Green alga).